The sequence spans 184 residues: DOMON domain-containing protein CBG21755 (184 aa).

Residues 1–20 form the signal peptide; that stretch reads MIVPISLLFLFLSFVPFSYS. The DOMON domain occupies 28–145; the sequence is EVASMSWMVK…CVNWIVVPGG (118 aa). Residue asparagine 49 is glycosylated (N-linked (GlcNAc...) asparagine).

The protein resides in the secreted. This Caenorhabditis briggsae protein is DOMON domain-containing protein CBG21755.